A 311-amino-acid polypeptide reads, in one-letter code: Peptide methionine sulfoxide reductase MsrA/MsrB 2 (311 aa).

The segment at 1 to 155 (MHEIYLAGGC…PNGYCHINVN (155 aa)) is peptide methionine sulfoxide reductase A. Cysteine 10 is an active-site residue. The MsrB domain occupies 172-295 (DEELKKTLSP…NSLSIRFIPK (124 aa)). Cysteine 284 acts as the Nucleophile in catalysis.

It in the N-terminal section; belongs to the MsrA Met sulfoxide reductase family. The protein in the C-terminal section; belongs to the MsrB Met sulfoxide reductase family.

It catalyses the reaction L-methionyl-[protein] + [thioredoxin]-disulfide + H2O = L-methionyl-(S)-S-oxide-[protein] + [thioredoxin]-dithiol. It carries out the reaction [thioredoxin]-disulfide + L-methionine + H2O = L-methionine (S)-S-oxide + [thioredoxin]-dithiol. The enzyme catalyses L-methionyl-[protein] + [thioredoxin]-disulfide + H2O = L-methionyl-(R)-S-oxide-[protein] + [thioredoxin]-dithiol. Functionally, has an important function as a repair enzyme for proteins that have been inactivated by oxidation. Catalyzes the reversible oxidation-reduction of methionine sulfoxide in proteins to methionine. This chain is Peptide methionine sulfoxide reductase MsrA/MsrB 2 (msrAB2), found in Streptococcus pneumoniae serotype 4 (strain ATCC BAA-334 / TIGR4).